Here is a 296-residue protein sequence, read N- to C-terminus: Fructose-bisphosphate aldolase class 1 (296 aa).

E175 acts as the Proton acceptor in catalysis. The active-site Schiff-base intermediate with dihydroxyacetone-P is the K212.

The protein belongs to the class I fructose-bisphosphate aldolase family.

The enzyme catalyses beta-D-fructose 1,6-bisphosphate = D-glyceraldehyde 3-phosphate + dihydroxyacetone phosphate. Its pathway is carbohydrate degradation; glycolysis; D-glyceraldehyde 3-phosphate and glycerone phosphate from D-glucose: step 4/4. This is Fructose-bisphosphate aldolase class 1 from Staphylococcus haemolyticus (strain JCSC1435).